Reading from the N-terminus, the 195-residue chain is Thioredoxin reductase-like selenoprotein T (195 aa).

The first 19 residues, 1-19, serve as a signal peptide directing secretion; the sequence is MRLLLLLLVAASAVVRSEA. A cross-link (cysteinyl-selenocysteine (Cys-Sec)) is located at residues 46–49; that stretch reads CVSU. Position 49 (Sec-49) is a non-standard amino acid, selenocysteine. A helical transmembrane segment spans residues 85–103; that stretch reads IASFLSVFKLVLIGLIIVG.

This sequence belongs to the SelWTH family. Selenoprotein T subfamily. May contain a selenide-sulfide bond between Cys-46 and Sec-49. This bond is speculated to serve as redox-active pair. In terms of tissue distribution, ubiquitous. Highly expressed in the endocrine pancreas. Expressed at low levels in the adult brain.

It is found in the endoplasmic reticulum membrane. It carries out the reaction [thioredoxin]-dithiol + NADP(+) = [thioredoxin]-disulfide + NADPH + H(+). In terms of biological role, selenoprotein with thioredoxin reductase-like oxidoreductase activity. Protects dopaminergic neurons against oxidative stress and cell death. Involved in ADCYAP1/PACAP-induced calcium mobilization and neuroendocrine secretion. Plays a role in fibroblast anchorage and redox regulation. In gastric smooth muscle, modulates the contraction processes through the regulation of calcium release and MYLK activation. In pancreatic islets, involved in the control of glucose homeostasis, contributes to prolonged ADCYAP1/PACAP-induced insulin secretion. The sequence is that of Thioredoxin reductase-like selenoprotein T from Mus musculus (Mouse).